Reading from the N-terminus, the 498-residue chain is MLALQHASKSFGPVRALSDVSLELYSGEAHALLGENGAGKSTLVKILSGVHRADGGELWVDGQLRVFHSPAEARDAGIAIIYQEPTLFPDLTVAENVLMGRQPLRRGRIDRRAMLTHVGRILQELGVPLDPARPVRGLSIADQQLVEIAKALSFQARVLIMDEPTAALTGQETERLFRVVRTLRARGAAVLLITHRLEEAFAECQRFTIMRDGRWVSSGPAAAYTIDSVVRGMVGRDVRELYPKLPVTPGEVALEVRGLSRRGVFRDVSFVVRRGEIVGLAGLVGAGRSEVARSIFGIDPRDAGEVRVQGRTIPAGNTQAAMRAGIGLVPEDRRQQGLVMDLSIERNATLTVLNRLRRGWLMDRTAETQTASDWTSRLRLKAHRLTDPVSTLSGGNQQKVVLAKWLATGPAVLIVDEPTRGVDVGAKAEVHRTLAELAAGGLAVVMISSDLPEVLGMADRILVMREGALVGELSRQDASEEAVMYLATGQQPAIGSVA.

ABC transporter domains are found at residues 2–237 (LALQ…VGRD) and 247–491 (VTPG…TGQQ). 34 to 41 (GENGAGKS) is a binding site for ATP.

Belongs to the ABC transporter superfamily. Ribose importer (TC 3.A.1.2.1) family. The complex is composed of an ATP-binding protein (RbsA), two transmembrane proteins (RbsC) and a solute-binding protein (RbsB).

The protein localises to the cell membrane. The enzyme catalyses D-ribose(out) + ATP + H2O = D-ribose(in) + ADP + phosphate + H(+). Part of the ABC transporter complex RbsABC involved in ribose import. Responsible for energy coupling to the transport system. The protein is Ribose import ATP-binding protein RbsA of Deinococcus geothermalis (strain DSM 11300 / CIP 105573 / AG-3a).